Consider the following 161-residue polypeptide: Ribonuclease P protein component 2 (161 aa).

It belongs to the eukaryotic/archaeal RNase P protein component 2 family. As to quaternary structure, consists of a catalytic RNA component and at least 4-5 protein subunits.

It localises to the cytoplasm. It catalyses the reaction Endonucleolytic cleavage of RNA, removing 5'-extranucleotides from tRNA precursor.. Functionally, part of ribonuclease P, a protein complex that generates mature tRNA molecules by cleaving their 5'-ends. The polypeptide is Ribonuclease P protein component 2 (Haloarcula marismortui (strain ATCC 43049 / DSM 3752 / JCM 8966 / VKM B-1809) (Halobacterium marismortui)).